Reading from the N-terminus, the 1563-residue chain is Rab-3-interacting molecule unc-10 (1563 aa).

Positions methionine 7–glutamate 133 constitute a RabBD domain. Over residues phenylalanine 25–glutamate 35 the composition is skewed to basic and acidic residues. Residues phenylalanine 25–aspartate 50 form a disordered region. The FYVE-type zinc finger occupies threonine 66–glutamine 121. 8 residues coordinate Zn(2+): cysteine 72, cysteine 75, cysteine 88, cysteine 91, cysteine 96, cysteine 99, cysteine 113, and cysteine 116. 2 disordered regions span residues lysine 128–asparagine 466 and glycine 582–histidine 605. Residues asparagine 172 to proline 182 are compositionally biased toward polar residues. 2 stretches are compositionally biased toward low complexity: residues asparagine 190–threonine 284 and glutamine 300–alanine 316. Basic and acidic residues predominate over residues glutamine 326–glutamate 345. Composition is skewed to polar residues over residues arginine 356–asparagine 367 and glutamine 379–glutamate 389. Residues phenylalanine 395–arginine 415 show a composition bias toward low complexity. One can recognise a PDZ domain in the interval histidine 643–arginine 733. The 123-residue stretch at isoleucine 840–cysteine 962 folds into the C2 1 domain. 3 disordered regions span residues glutamate 1054–aspartate 1163, glycine 1177–alanine 1311, and valine 1346–threonine 1373. Polar residues predominate over residues tryptophan 1086–threonine 1097. The segment covering tyrosine 1112–arginine 1121 has biased composition (basic residues). Positions methionine 1129–arginine 1154 are enriched in basic and acidic residues. The segment covering proline 1181 to glutamine 1230 has biased composition (low complexity). Residues glycine 1242 to proline 1255 are compositionally biased toward polar residues. Low complexity predominate over residues threonine 1256–serine 1277. Over residues phenylalanine 1278–arginine 1288 the composition is skewed to polar residues. A compositionally biased stretch (low complexity) spans asparagine 1297 to alanine 1311. Residues valine 1417 to tyrosine 1536 enclose the C2 2 domain.

As to expression, restricted to discrete puncta in synapse-rich regions of the nervous system including the nerve ring, the ventral nerve cord and the dorsal nerve cord. Localized expression was found in the head.

Its subcellular location is the synapse. In terms of biological role, regulates the efficiency of a post-docking step of the release pathway. Acts after vesicle docking likely via regulating priming. May regulate the conformational changes in syntaxin. Binding of vesicles via rab-3[GTP] to Rim may signal the presence of a docked synaptic vesicle. Rim may then signal to unc-13 to change the conformation of syntaxin from the closed to the open state. Syntaxin could then engage synaptobrevin on the docked vesicle to form SNARE complexes and to prime the vesicle for release. Not required for the development or the structural organization of synapses. May play a role in regulating entry into the dauer state. The chain is Rab-3-interacting molecule unc-10 from Caenorhabditis elegans.